We begin with the raw amino-acid sequence, 98 residues long: MAAEPLTELEESIETVVTTFFTFARQEGRKDSLSVNEFKELVTQQLPHLLKDVGSLDEKMKSLDVNQDSELKFNEYWRLIGELAKEIRKKKDLKIRKK.

In terms of domain architecture, EF-hand spans 18 to 53 (TTFFTFARQEGRKDSLSVNEFKELVTQQLPHLLKDV). Residues Ser-32, Glu-37, Asp-64, Asn-66, Asp-68, Glu-70, and Glu-75 each coordinate Ca(2+). Residue Ser-32 is modified to Phosphoserine.

The protein belongs to the S-100 family. Homodimer. Part of a copper-dependent multiprotein complex containing S100A13, FGF1 and SYT1. Interacts with FGF1 and SYT1. Interacts with IL1A. In terms of tissue distribution, expressed in heart and skeletal muscle.

The protein resides in the cytoplasm. It is found in the secreted. In terms of biological role, plays a role in the export of proteins that lack a signal peptide and are secreted by an alternative pathway. Binds two calcium ions per subunit. Binds one copper ion. Binding of one copper ion does not interfere with calcium binding. Required for the copper-dependent stress-induced export of IL1A and FGF1. The calcium-free protein binds to lipid vesicles containing phosphatidylserine, but not to vesicles containing phosphatidylcholine. This is Protein S100-A13 (S100A13) from Homo sapiens (Human).